Here is a 1370-residue protein sequence, read N- to C-terminus: DNA-directed RNA polymerase subunit beta (1370 aa).

Belongs to the RNA polymerase beta chain family. The RNAP catalytic core consists of 2 alpha, 1 beta, 1 beta' and 1 omega subunit. When a sigma factor is associated with the core the holoenzyme is formed, which can initiate transcription.

The catalysed reaction is RNA(n) + a ribonucleoside 5'-triphosphate = RNA(n+1) + diphosphate. Its function is as follows. DNA-dependent RNA polymerase catalyzes the transcription of DNA into RNA using the four ribonucleoside triphosphates as substrates. This is DNA-directed RNA polymerase subunit beta from Delftia acidovorans (strain DSM 14801 / SPH-1).